The primary structure comprises 336 residues: Tryptophan--tRNA ligase (336 aa).

ATP is bound by residues 11 to 13 and 19 to 20; these read TTT and GN. The 'HIGH' region signature appears at 12-20; sequence TTGIPHLGN. Asp145 provides a ligand contact to L-tryptophan. ATP-binding positions include 157–159, Leu196, and 203–207; these read GRD and KMSKS. Positions 203–207 match the 'KMSKS' region motif; sequence KMSKS.

It belongs to the class-I aminoacyl-tRNA synthetase family. In terms of assembly, homodimer.

The protein localises to the cytoplasm. It carries out the reaction tRNA(Trp) + L-tryptophan + ATP = L-tryptophyl-tRNA(Trp) + AMP + diphosphate + H(+). Its function is as follows. Catalyzes the attachment of tryptophan to tRNA(Trp). This Neisseria meningitidis serogroup A / serotype 4A (strain DSM 15465 / Z2491) protein is Tryptophan--tRNA ligase.